Reading from the N-terminus, the 234-residue chain is Sugar fermentation stimulation protein homolog (234 aa).

It belongs to the SfsA family.

In Shewanella halifaxensis (strain HAW-EB4), this protein is Sugar fermentation stimulation protein homolog.